A 403-amino-acid polypeptide reads, in one-letter code: Imidazolonepropionase (403 aa).

The Fe(3+) site is built by His-68 and His-70. Zn(2+) is bound by residues His-68 and His-70. 3 residues coordinate 4-imidazolone-5-propanoate: Arg-77, Tyr-140, and His-173. Residue Tyr-140 coordinates N-formimidoyl-L-glutamate. Residue His-238 participates in Fe(3+) binding. His-238 serves as a coordination point for Zn(2+). Gln-241 is a binding site for 4-imidazolone-5-propanoate. A Fe(3+)-binding site is contributed by Asp-313. A Zn(2+)-binding site is contributed by Asp-313. Residues Asn-315 and Gly-317 each coordinate N-formimidoyl-L-glutamate. Thr-318 contacts 4-imidazolone-5-propanoate.

Belongs to the metallo-dependent hydrolases superfamily. HutI family. Zn(2+) is required as a cofactor. Requires Fe(3+) as cofactor.

Its subcellular location is the cytoplasm. The enzyme catalyses 4-imidazolone-5-propanoate + H2O = N-formimidoyl-L-glutamate. Its pathway is amino-acid degradation; L-histidine degradation into L-glutamate; N-formimidoyl-L-glutamate from L-histidine: step 3/3. In terms of biological role, catalyzes the hydrolytic cleavage of the carbon-nitrogen bond in imidazolone-5-propanoate to yield N-formimidoyl-L-glutamate. It is the third step in the universal histidine degradation pathway. The sequence is that of Imidazolonepropionase from Psychromonas ingrahamii (strain DSM 17664 / CCUG 51855 / 37).